Consider the following 152-residue polypeptide: Xanthine-guanine phosphoribosyltransferase (152 aa).

5-phospho-alpha-D-ribose 1-diphosphate-binding positions include 37–38 (RG), R69, and 88–96 (DDLVDTGGT). R69 is a binding site for GMP. Residue D89 coordinates Mg(2+). The guanine site is built by D92 and I135. Xanthine is bound by residues D92 and I135. Residues 92-96 (DTGGT) and 134-135 (WI) each bind GMP.

The protein belongs to the purine/pyrimidine phosphoribosyltransferase family. XGPT subfamily. In terms of assembly, homotetramer. Mg(2+) is required as a cofactor.

The protein resides in the cell inner membrane. The catalysed reaction is GMP + diphosphate = guanine + 5-phospho-alpha-D-ribose 1-diphosphate. It catalyses the reaction XMP + diphosphate = xanthine + 5-phospho-alpha-D-ribose 1-diphosphate. The enzyme catalyses IMP + diphosphate = hypoxanthine + 5-phospho-alpha-D-ribose 1-diphosphate. It functions in the pathway purine metabolism; GMP biosynthesis via salvage pathway; GMP from guanine: step 1/1. Its pathway is purine metabolism; XMP biosynthesis via salvage pathway; XMP from xanthine: step 1/1. In terms of biological role, purine salvage pathway enzyme that catalyzes the transfer of the ribosyl-5-phosphate group from 5-phospho-alpha-D-ribose 1-diphosphate (PRPP) to the N9 position of the 6-oxopurines guanine and xanthine to form the corresponding ribonucleotides GMP (guanosine 5'-monophosphate) and XMP (xanthosine 5'-monophosphate), with the release of PPi. To a lesser extent, also acts on hypoxanthine. The chain is Xanthine-guanine phosphoribosyltransferase from Photobacterium profundum (strain SS9).